We begin with the raw amino-acid sequence, 346 residues long: Probable dual-specificity RNA methyltransferase RlmN (346 aa).

Residue E76 is the Proton acceptor of the active site. One can recognise a Radical SAM core domain in the interval 97–329 (SYDRATICVS…TFIRKPRGRD (233 aa)). Residues C104 and C334 are joined by a disulfide bond. The [4Fe-4S] cluster site is built by C111, C115, and C118. S-adenosyl-L-methionine contacts are provided by residues 162–163 (GE), S192, 215–217 (SLN), and N291. Catalysis depends on C334, which acts as the S-methylcysteine intermediate.

This sequence belongs to the radical SAM superfamily. RlmN family. Requires [4Fe-4S] cluster as cofactor.

Its subcellular location is the cytoplasm. It carries out the reaction adenosine(2503) in 23S rRNA + 2 reduced [2Fe-2S]-[ferredoxin] + 2 S-adenosyl-L-methionine = 2-methyladenosine(2503) in 23S rRNA + 5'-deoxyadenosine + L-methionine + 2 oxidized [2Fe-2S]-[ferredoxin] + S-adenosyl-L-homocysteine. The catalysed reaction is adenosine(37) in tRNA + 2 reduced [2Fe-2S]-[ferredoxin] + 2 S-adenosyl-L-methionine = 2-methyladenosine(37) in tRNA + 5'-deoxyadenosine + L-methionine + 2 oxidized [2Fe-2S]-[ferredoxin] + S-adenosyl-L-homocysteine. Its function is as follows. Specifically methylates position 2 of adenine 2503 in 23S rRNA and position 2 of adenine 37 in tRNAs. This is Probable dual-specificity RNA methyltransferase RlmN from Koribacter versatilis (strain Ellin345).